We begin with the raw amino-acid sequence, 182 residues long: uncharacterized protein (182 aa).

Residues 36–164 (LRHRATYIVV…TPDSLKALSL (129 aa)) form the Nudix hydrolase domain. A Nudix box motif is present at residues 73 to 95 (GGVVQSGENYLESARREAEEELG). Mg(2+)-binding residues include Glu89 and Glu93.

Belongs to the Nudix hydrolase family. Mg(2+) serves as cofactor.

This is an uncharacterized protein from Yersinia pestis.